A 277-amino-acid polypeptide reads, in one-letter code: MDPSILSKLEYKTVNNIYYGTGIFIIRDDNDDIKYFKTYGKLTEFKHDSFLLVDLNVMIYDTVKTDYLITISDRQELTLCSASITDLKNFRIKGSRDTTNNSVLFSQFTKNNPLIVKSKNNPIYLEIKFQCETRLLKSLYFFSTGPKCGIKKVDENNYTNEYTHFDNFTEIYQTDEKKHEIVTFNNWYKFDDFIGFKLYNLNFSIINNNMEIIDIEHDRVSLSLNEFVNNFDFELLTEDNPIFIESGNIPSVLFFDKCTDSEYHRINFTVKKIDEID.

This is an uncharacterized protein from Acanthamoeba polyphaga mimivirus (APMV).